Reading from the N-terminus, the 508-residue chain is Kinesin light chain 3 (508 aa).

The interval 1-20 (MSVQVAAPGSTGLGPERLNP) is disordered. Residues 88 to 150 (LLALSAHVSV…EEEKSHLQFL (63 aa)) adopt a coiled-coil conformation. Positions 154 to 197 (RQYDPPEESQRPESPPRRDSLASLFPSEEEEKKGPEAAGAAAAQ) are disordered. Residues 161–173 (ESQRPESPPRRDS) show a composition bias toward basic and acidic residues. At S173 the chain carries Phosphoserine. TPR repeat units lie at residues 207 to 240 (LRTLHNLVIQYAGQGRYEVAVPLCRQALEDLERS), 249 to 282 (ATMLNILALVYRDQNKYKEATELLHDALQIREQT), 291 to 324 (AATLNNLAVLYGKRGRYREAEPLCQRALEIREKV), 333 to 366 (AKQLNNLALLCQNQGKFQDVERHYARALSIYEAL), and 375 to 408 (AKTKNNLASAYLKQNKYQQAEELYKEILSQEALP). A disordered region spans residues 409–441 (APLGAPQGGTAGDTQQQVLRRSSSFSKLRESIR). Positions 420-434 (GDTQQQVLRRSSSFS) are enriched in polar residues. S467 carries the phosphoserine modification. The interval 486–508 (LSTRHLSEAPRTLSISTQDLSPR) is disordered. Residues 498 to 508 (LSISTQDLSPR) show a composition bias toward polar residues. Position 502 is a phosphothreonine (T502). At S506 the chain carries Phosphoserine.

The protein belongs to the kinesin light chain family. Oligomer composed of two heavy chains and two light chains. Associates with microtubulin in an ATP-dependent manner. Interacts with KIF5C. Interacts with ODF1. Interacts with LRGUK. Interacts with VDAC2. In terms of tissue distribution, expressed in postmeiotic male germ cells (at protein level). Expressed in the testes (at protein level). Expressed in spleen, intestine, brain and ovary.

It is found in the cytoplasm. It localises to the cytoskeleton. The protein resides in the mitochondrion. Kinesin is a microtubule-associated force-producing protein that may play a role in organelle transport. Plays a role during spermiogenesis in the development of the sperm tail midpiece and in the normal function of spermatozoa. May play a role in the formation of the mitochondrial sheath formation in the developing spermatid midpiece. This Mus musculus (Mouse) protein is Kinesin light chain 3 (Klc3).